The following is a 220-amino-acid chain: UPF0758 protein Asuc_0013 (220 aa).

The 123-residue stretch at E98–L220 folds into the MPN domain. Positions 169, 171, and 182 each coordinate Zn(2+). The short motif at H169–D182 is the JAMM motif element.

This sequence belongs to the UPF0758 family.

In Actinobacillus succinogenes (strain ATCC 55618 / DSM 22257 / CCUG 43843 / 130Z), this protein is UPF0758 protein Asuc_0013.